The sequence spans 167 residues: V-type proton ATPase subunit c' (167 aa).

Topologically, residues 1–13 (MAEIMADSELAPK) are lumenal. The helical transmembrane segment at 14 to 34 (FAPFIGMAGIAAAMIFGSAGA) threads the bilayer. Over 35 to 59 (AYGTAKSGIGIAGVGTFRPDLIMKC) the chain is Cytoplasmic. Residues 60–80 (LIPVVMSGIIAVYALVVAVLI) traverse the membrane as a helical segment. Topologically, residues 81–101 (AQDLGPPGSGQHYSLFNGFMH) are lumenal. A helical membrane pass occupies residues 102–122 (LACGLSVGLTGLAAGYCIGIV). The Cytoplasmic portion of the chain corresponds to 123 to 140 (GDKGVRSFMLQSRIFVGM). The helical transmembrane segment at 141 to 161 (VLILIFGEVLGLYGLIVALIL) threads the bilayer. At 162-167 (NTKSKG) the chain is on the lumenal side.

Belongs to the V-ATPase proteolipid subunit family. In terms of assembly, V-ATPase is a heteromultimeric enzyme composed of a peripheral catalytic V1 complex (components A to H) attached to an integral membrane V0 proton pore complex (components: a, c, c', c'', d, e, f and VOA1). The decameric c-ring forms the proton-conducting pore, and is composed of eight proteolipid subunits c, one subunit c' and one subunit c''.

It localises to the vacuole membrane. Functionally, proton-conducting pore forming subunit of the V0 complex of vacuolar(H+)-ATPase (V-ATPase), a multisubunit enzyme composed of a peripheral complex (V1) that hydrolyzes ATP and a membrane integral complex (V0) that translocates protons. V-ATPase is responsible for acidifying and maintaining the pH of intracellular compartments. This chain is V-type proton ATPase subunit c' (vma-11), found in Neurospora crassa (strain ATCC 24698 / 74-OR23-1A / CBS 708.71 / DSM 1257 / FGSC 987).